The following is a 330-amino-acid chain: GMP reductase (330 aa).

The active-site Thioimidate intermediate is cysteine 180. Residue 209-232 (LIADGGIRHNGDIAKSVRFGASMV) participates in NADP(+) binding.

This sequence belongs to the IMPDH/GMPR family. GuaC type 2 subfamily.

It catalyses the reaction IMP + NH4(+) + NADP(+) = GMP + NADPH + 2 H(+). Its function is as follows. Catalyzes the irreversible NADPH-dependent deamination of GMP to IMP. It functions in the conversion of nucleobase, nucleoside and nucleotide derivatives of G to A nucleotides, and in maintaining the intracellular balance of A and G nucleotides. In Lactobacillus johnsonii (strain CNCM I-12250 / La1 / NCC 533), this protein is GMP reductase.